Consider the following 142-residue polypeptide: Spliceosomal protein DIB1 (142 aa).

Belongs to the DIM1 family. Component of the 25S [U4/U6.U5] tri-snRNP.

It is found in the nucleus. Essential role in pre-mRNA splicing. Also essential for entry into mitosis (G2/M progression) as well as for chromosome segregation during mitosis. This Candida glabrata (strain ATCC 2001 / BCRC 20586 / JCM 3761 / NBRC 0622 / NRRL Y-65 / CBS 138) (Yeast) protein is Spliceosomal protein DIB1 (DIB1).